Reading from the N-terminus, the 282-residue chain is NADH-ubiquinone oxidoreductase chain 2 (282 aa).

Transmembrane regions (helical) follow at residues Ile-17–Ile-37, Ser-58–Leu-78, Phe-87–Phe-107, Ile-115–Cys-135, Phe-166–Ile-186, Thr-202–Leu-222, and Phe-232–Ile-252.

The protein belongs to the complex I subunit 2 family.

The protein localises to the mitochondrion inner membrane. It carries out the reaction a ubiquinone + NADH + 5 H(+)(in) = a ubiquinol + NAD(+) + 4 H(+)(out). In terms of biological role, core subunit of the mitochondrial membrane respiratory chain NADH dehydrogenase (Complex I) that is believed to belong to the minimal assembly required for catalysis. Complex I functions in the transfer of electrons from NADH to the respiratory chain. The immediate electron acceptor for the enzyme is believed to be ubiquinone. The chain is NADH-ubiquinone oxidoreductase chain 2 from Caenorhabditis elegans.